The chain runs to 537 residues: Tyrosine-protein kinase Yes (537 aa).

Residues 1–22 show a composition bias toward basic and acidic residues; it reads MGCIKSKEDKGPSIKYRTEPKP. The interval 1–60 is disordered; the sequence is MGCIKSKEDKGPSIKYRTEPKPDPGSQYGADPTQATQSPGIKGPAPNFNSHSMTPFGGSS. A lipid anchor (N-myristoyl glycine) is attached at G2. C3 is lipidated: S-palmitoyl cysteine; in membrane form. Positions 85-146 constitute an SH3 domain; sequence GGVTVFVALY…PSNYVAPADS (62 aa). Positions 152-249 constitute an SH2 domain; it reads WYFGKMGRKD…GLCYRLTTVC (98 aa). One can recognise a Protein kinase domain in the interval 271 to 524; it reads LRLDVKLGQG…YIQSFLEDYF (254 aa). Residues 277-285 and K299 contribute to the ATP site; that span reads LGQGCFGEV. D390 serves as the catalytic Proton acceptor. A Phosphotyrosine; by autocatalysis modification is found at Y420. Phosphotyrosine; by CSK is present on Y531.

The protein belongs to the protein kinase superfamily. Tyr protein kinase family. SRC subfamily. Post-translationally, autophosphorylated at Tyr-420 inducing activation. In terms of processing, palmitoylation at Cys-3 promotes membrane localization.

The protein localises to the cell membrane. Its subcellular location is the cytoplasm. It localises to the cytoskeleton. It is found in the microtubule organizing center. The protein resides in the centrosome. The protein localises to the cytosol. Its subcellular location is the cell junction. The enzyme catalyses L-tyrosyl-[protein] + ATP = O-phospho-L-tyrosyl-[protein] + ADP + H(+). In terms of biological role, non-receptor protein tyrosine kinase that is involved in the regulation of cell growth and survival, apoptosis, cell-cell adhesion, cytoskeleton remodeling, differentiation, G2/M progression and cytokinesis. The protein is Tyrosine-protein kinase Yes (yes1) of Xenopus laevis (African clawed frog).